We begin with the raw amino-acid sequence, 267 residues long: Thiazole synthase (267 aa).

Residue Lys-101 is the Schiff-base intermediate with DXP of the active site. 1-deoxy-D-xylulose 5-phosphate-binding positions include Gly-162, Ala-188–Gly-189, and Asn-210–Thr-211. A disordered region spans residues His-247 to Val-267.

It belongs to the ThiG family. In terms of assembly, homotetramer. Forms heterodimers with either ThiH or ThiS.

The protein localises to the cytoplasm. It carries out the reaction [ThiS sulfur-carrier protein]-C-terminal-Gly-aminoethanethioate + 2-iminoacetate + 1-deoxy-D-xylulose 5-phosphate = [ThiS sulfur-carrier protein]-C-terminal Gly-Gly + 2-[(2R,5Z)-2-carboxy-4-methylthiazol-5(2H)-ylidene]ethyl phosphate + 2 H2O + H(+). It participates in cofactor biosynthesis; thiamine diphosphate biosynthesis. Its function is as follows. Catalyzes the rearrangement of 1-deoxy-D-xylulose 5-phosphate (DXP) to produce the thiazole phosphate moiety of thiamine. Sulfur is provided by the thiocarboxylate moiety of the carrier protein ThiS. In vitro, sulfur can be provided by H(2)S. The chain is Thiazole synthase from Deinococcus geothermalis (strain DSM 11300 / CIP 105573 / AG-3a).